A 395-amino-acid chain; its full sequence is Phosphoglycerate kinase (395 aa).

Residues aspartate 21–asparagine 23, arginine 36, histidine 59–arginine 62, arginine 113, and arginine 146 each bind substrate. ATP-binding positions include lysine 197, glutamate 324, and glycine 350–threonine 353.

It belongs to the phosphoglycerate kinase family. Monomer.

The protein localises to the cytoplasm. It catalyses the reaction (2R)-3-phosphoglycerate + ATP = (2R)-3-phospho-glyceroyl phosphate + ADP. It participates in carbohydrate degradation; glycolysis; pyruvate from D-glyceraldehyde 3-phosphate: step 2/5. In Acinetobacter baumannii (strain ACICU), this protein is Phosphoglycerate kinase.